Consider the following 394-residue polypeptide: Probable acetyl-CoA acyltransferase (394 aa).

The Acyl-thioester intermediate role is filled by Cys-88. Catalysis depends on proton acceptor residues His-349 and Cys-378.

It belongs to the thiolase-like superfamily. Thiolase family.

Its subcellular location is the cytoplasm. It catalyses the reaction 2 acetyl-CoA = acetoacetyl-CoA + CoA. The chain is Probable acetyl-CoA acyltransferase from Staphylococcus epidermidis (strain ATCC 35984 / DSM 28319 / BCRC 17069 / CCUG 31568 / BM 3577 / RP62A).